The primary structure comprises 441 residues: C4-dicarboxylate transport protein (441 aa).

The Cytoplasmic portion of the chain corresponds to 1–30 (MIIEHSAEVRGKTPLYRHLYVQVLAAIAAG). The helical transmembrane segment at 31 to 49 (ILLGHFYPDIGTELKPLGD) threads the bilayer. Topologically, residues 50–68 (AFIRLVKMIIAPVIFLTVA) are periplasmic. A helical transmembrane segment spans residues 69 to 87 (TGIAGMTDLAKVGRVAGKA). The Cytoplasmic segment spans residues 88–99 (MIYFLAFSTLAL). A helical membrane pass occupies residues 100–118 (VVGLVVANVVQPGAGMHID). At 119-149 (PASLDAKAVATYAEKAHEQSITGFLMNIIPT) the chain is on the periplasmic side. A helical membrane pass occupies residues 150–168 (TLVGAFAEGDILQVLFISV). The Cytoplasmic segment spans residues 169 to 171 (LFG). Residues 172–190 (ISLAIVGKKAEPVVDFLQA) form a helical membrane-spanning segment. At 191–209 (LTLPIFRLVAILMKAAPIG) the chain is on the periplasmic side. The chain crosses the membrane as a helical span at residues 210-228 (AFGAMAFTIGKYGIASIAN). At 229-241 (LAMLIGTFYLTSF) the chain is on the cytoplasmic side. The chain crosses the membrane as a helical span at residues 242-260 (LFVFIVLGAVARYNGFSIL). The Periplasmic portion of the chain corresponds to 261 to 281 (SLIRYIKEELLLVLGTSSSEA). The helical transmembrane segment at 282-300 (ALPGLMNKMEKAGCKRSVV) threads the bilayer. Residues 301 to 320 (GLVIPTGYSFNLDGTNIYMT) are Cytoplasmic-facing. Residues 321–339 (LAALFIAQATDTPLSYGDQ) traverse the membrane as a helical segment. The Periplasmic portion of the chain corresponds to 340 to 350 (ILLLLVAMLSS). Residues 351-369 (KGAAGITGAGFITLAATLS) traverse the membrane as a helical segment. Over 370 to 378 (VVPSVPVAG) the chain is Cytoplasmic. A helical transmembrane segment spans residues 379-398 (MALILGIDRFMSECRALTNF). The Periplasmic portion of the chain corresponds to 399 to 405 (VGNAVAT). The helical transmembrane segment at 406–424 (IVVAKWEGELDQAQLSAAL) threads the bilayer. Residues 425–441 (GGEASVEAIPAVVQPAE) lie on the Cytoplasmic side of the membrane.

This sequence belongs to the dicarboxylate/amino acid:cation symporter (DAACS) (TC 2.A.23) family.

It localises to the cell inner membrane. Responsible for the transport of dicarboxylates such as succinate, fumarate, and malate from the periplasm across the inner membrane. This transport system plays an important role in the energy supply of rhizobium-legume symbionts. This chain is C4-dicarboxylate transport protein (dctA), found in Rhizobium meliloti (strain 1021) (Ensifer meliloti).